The primary structure comprises 137 residues: Prefoldin subunit alpha (137 aa).

Belongs to the prefoldin subunit alpha family. Heterohexamer of two alpha and four beta subunits.

It is found in the cytoplasm. Functionally, molecular chaperone capable of stabilizing a range of proteins. Seems to fulfill an ATP-independent, HSP70-like function in archaeal de novo protein folding. In Archaeoglobus fulgidus (strain ATCC 49558 / DSM 4304 / JCM 9628 / NBRC 100126 / VC-16), this protein is Prefoldin subunit alpha (pfdA).